A 429-amino-acid chain; its full sequence is Adenylosuccinate synthetase (429 aa).

Residues 13 to 19 and 41 to 43 contribute to the GTP site; these read GDEGKGK and GHT. Asp14 functions as the Proton acceptor in the catalytic mechanism. Asp14 and Gly41 together coordinate Mg(2+). Residues 14–17, 39–42, Thr130, Arg144, Gln225, Thr240, and Arg304 contribute to the IMP site; these read DEGK and NAGH. The active-site Proton donor is His42. 300 to 306 provides a ligand contact to substrate; the sequence is ATTGRRR. Residues Arg306, 332–334, and 417–419 each bind GTP; these read KLD and STG.

It belongs to the adenylosuccinate synthetase family. As to quaternary structure, homodimer. Mg(2+) serves as cofactor.

It is found in the cytoplasm. It catalyses the reaction IMP + L-aspartate + GTP = N(6)-(1,2-dicarboxyethyl)-AMP + GDP + phosphate + 2 H(+). Its pathway is purine metabolism; AMP biosynthesis via de novo pathway; AMP from IMP: step 1/2. Its function is as follows. Plays an important role in the de novo pathway of purine nucleotide biosynthesis. Catalyzes the first committed step in the biosynthesis of AMP from IMP. The sequence is that of Adenylosuccinate synthetase from Buchnera aphidicola subsp. Baizongia pistaciae (strain Bp).